We begin with the raw amino-acid sequence, 278 residues long: NAD kinase (278 aa).

The active-site Proton acceptor is the D67. NAD(+)-binding positions include 67 to 68, R72, 137 to 138, K148, R165, D167, 178 to 183, and Q237; these read DG, NE, and TGYALS.

The protein belongs to the NAD kinase family. A divalent metal cation is required as a cofactor.

The protein localises to the cytoplasm. It carries out the reaction NAD(+) + ATP = ADP + NADP(+) + H(+). Functionally, involved in the regulation of the intracellular balance of NAD and NADP, and is a key enzyme in the biosynthesis of NADP. Catalyzes specifically the phosphorylation on 2'-hydroxyl of the adenosine moiety of NAD to yield NADP. This Thermococcus gammatolerans (strain DSM 15229 / JCM 11827 / EJ3) protein is NAD kinase.